Here is a 289-residue protein sequence, read N- to C-terminus: Rhodopsin (289 aa).

Topologically, residues 1–7 (YLVSPAA) are extracellular. The helical transmembrane segment at 8-32 (YAALGAYMFLLILIGFPVNFLTLYV) threads the bilayer. Residues 33 to 44 (TLEHKKLRTPLN) are Cytoplasmic-facing. Residues 45–67 (YILLNLAVADLFMVLGGFTTTMY) traverse the membrane as a helical segment. Over 68–81 (TSMHGYFVLGRLGC) the chain is Extracellular. Residues Cys-81 and Cys-158 are joined by a disulfide bond. Residues 82–104 (NLEGFFATLGGEIALWSLVVLAI) form a helical membrane-spanning segment. Positions 105-107 (ERW) match the 'Ionic lock' involved in activated form stabilization motif. The Cytoplasmic portion of the chain corresponds to 105 to 123 (ERWIVVCKPISNFRFTEDN). The chain crosses the membrane as a helical span at residues 124–144 (AIMGLAFSWVMALTCAVPPLV). Residues 145-173 (GWSRYIPEGMQCSCGVDYYTRAEGFNNES) are Extracellular-facing. Asn-171 is a glycosylation site (N-linked (GlcNAc...) asparagine). A helical membrane pass occupies residues 174-195 (FVIYMFIVHFPIPLSVIFFCYG). Over 196–223 (RLLCAVKEAAAAQQESETTQRAEKEVSR) the chain is Cytoplasmic. The helical transmembrane segment at 224–245 (MVVILVIGFLVCWLPYASVAWW) threads the bilayer. Topologically, residues 246–257 (IFCNQGSDFGPI) are extracellular. Residues 258–279 (FMTLPSFFAKRPAIYNPMIYIC) traverse the membrane as a helical segment. Lys-267 is modified (N6-(retinylidene)lysine). Over 280–289 (MNKQFRHCMI) the chain is Cytoplasmic.

The protein belongs to the G-protein coupled receptor 1 family. Opsin subfamily. Post-translationally, phosphorylated on some or all of the serine and threonine residues present in the C-terminal region. In terms of processing, contains one covalently linked retinal chromophore.

The protein localises to the membrane. Its subcellular location is the cell projection. It localises to the cilium. The protein resides in the photoreceptor outer segment. Photoreceptor required for image-forming vision at low light intensity. While most salt water fish species use retinal as chromophore, most freshwater fish use 3-dehydroretinal, or a mixture of retinal and 3-dehydroretinal. Light-induced isomerization of 11-cis to all-trans retinal triggers a conformational change that activates signaling via G-proteins. Subsequent receptor phosphorylation mediates displacement of the bound G-protein alpha subunit by arrestin and terminates signaling. The protein is Rhodopsin (rho) of Batrachocottus multiradiatus (Baikal sculpin).